We begin with the raw amino-acid sequence, 340 residues long: Ephrin-B3 (340 aa).

Residues 1–27 form the signal peptide; it reads MGAPHFGPGGVQVGALLLLGFAGLVSG. Positions 28-167 constitute an Ephrin RBD domain; that stretch reads LSLEPVYWNS…TRGMKVLLRV (140 aa). Over 28–227 the chain is Extracellular; it reads LSLEPVYWNS…GPLPPPSMPA (200 aa). 2 disulfides stabilise this stretch: cysteine 62–cysteine 104 and cysteine 92–cysteine 156. Positions 168-227 are disordered; sequence GQSPRGGAVPRKPVSEMPMERDRGAAHSAEPGRDTIPGDPSSNATSRGAEGPLPPPSMPA. A compositionally biased stretch (basic and acidic residues) spans 185-200; that stretch reads PMERDRGAAHSAEPGR. N-linked (GlcNAc...) asparagine glycosylation is present at asparagine 210. Residues 228–248 form a helical membrane-spanning segment; the sequence is VAGAAGGMALLLLGVAGAGGA. Residues 249–340 are Cytoplasmic-facing; that stretch reads MCWRRRRAKP…QSPPNIYYKV (92 aa). The interval 254–300 is disordered; sequence RRAKPSESRHPGPGSFGRGGSLGLGGGGGMGPREAEPGELGIALRGG. Residues 267 to 284 are compositionally biased toward gly residues; it reads GSFGRGGSLGLGGGGGMG. At arginine 271 the chain carries Omega-N-methylarginine. Phosphoserine is present on serine 274. Residues 338–340 carry the PDZ-binding motif; the sequence is YKV.

The protein belongs to the ephrin family. In terms of assembly, interacts with GRIP1 and GRIP2. In terms of tissue distribution, expressed on lateral floor plate cells, specifically on commissural axon segments that have passed through the floor plate. Expressed in cells of the retinal ganglion cell layer during retinal axon guidance to the optic disk. Expressed in myogenic progenitor cells.

The protein resides in the membrane. Functionally, cell surface transmembrane ligand for Eph receptors, a family of receptor tyrosine kinases which are crucial for migration, repulsion and adhesion during neuronal, vascular and epithelial development. Binds promiscuously Eph receptors residing on adjacent cells, leading to contact-dependent bidirectional signaling into neighboring cells. The signaling pathway downstream of the receptor is referred to as forward signaling while the signaling pathway downstream of the ephrin ligand is referred to as reverse signaling. May play a pivotal role in forebrain function. Binds to, and induce the collapse of, commissural axons/growth cones in vitro. May play a role in constraining the orientation of longitudinally projecting axons. The sequence is that of Ephrin-B3 (Efnb3) from Mus musculus (Mouse).